Consider the following 249-residue polypeptide: Enolase-phosphatase E1 (249 aa).

Residues Asp15 and Glu17 each coordinate Mg(2+). Substrate contacts are provided by residues 146 to 147 (SS) and Lys180. Asp205 is a binding site for Mg(2+).

Belongs to the HAD-like hydrolase superfamily. MasA/MtnC family. As to quaternary structure, monomer. Mg(2+) is required as a cofactor.

It is found in the cytoplasm. Its subcellular location is the nucleus. The enzyme catalyses 5-methylsulfanyl-2,3-dioxopentyl phosphate + H2O = 1,2-dihydroxy-5-(methylsulfanyl)pent-1-en-3-one + phosphate. It functions in the pathway amino-acid biosynthesis; L-methionine biosynthesis via salvage pathway; L-methionine from S-methyl-5-thio-alpha-D-ribose 1-phosphate: step 3/6. The protein operates within amino-acid biosynthesis; L-methionine biosynthesis via salvage pathway; L-methionine from S-methyl-5-thio-alpha-D-ribose 1-phosphate: step 4/6. In terms of biological role, bifunctional enzyme that catalyzes the enolization of 2,3-diketo-5-methylthiopentyl-1-phosphate (DK-MTP-1-P) into the intermediate 2-hydroxy-3-keto-5-methylthiopentenyl-1-phosphate (HK-MTPenyl-1-P), which is then dephosphorylated to form the acireductone 1,2-dihydroxy-3-keto-5-methylthiopentene (DHK-MTPene). The sequence is that of Enolase-phosphatase E1 from Caenorhabditis briggsae.